We begin with the raw amino-acid sequence, 99 residues long: uncharacterized protein (99 aa).

A helical membrane pass occupies residues 76-96 (VLLGLASGMIGGIIGMFMWVL).

Its subcellular location is the host membrane. This is an uncharacterized protein from Haemophilus phage HP1 (strain HP1c1) (Bacteriophage HP1).